Here is a 1262-residue protein sequence, read N- to C-terminus: Unconventional myosin-VI (1262 aa).

In terms of domain architecture, Myosin N-terminal SH3-like spans 2-53 (EDGKPVWAPHPTDGFQMGNIVDIGPDSLTIEPLNQKGKTFLALINQVFPAEE). In terms of domain architecture, Myosin motor spans 57-771 (KDVEDNCSLM…KFAEFDQIMK (715 aa)). Position 151–158 (151–158 (GESGAGKT)) interacts with ATP. Ser267 carries the phosphoserine modification. Positions 273–317 (YLNRGCTRFFANKETDKQILQNRKSPEYVKAGSLKDPLLDDHGDF) are responsible for slow ATPase activity. The residue at position 405 (Thr405) is a Phosphothreonine. Ser604 is modified (phosphoserine). Actin-binding regions lie at residues 651-673 (LNLLLDKLRSTGASFIRCIKPNL) and 665-672 (FIRCIKPN). Positions 782–810 (KRVNLWLVCSRWKKVQWCSLSVIKLKNKI) are required for binding calmodulin. One can recognise an IQ domain in the interval 814–834 (AEACIKMQKTIRMWLCKRRHK). The interval 835–916 (PRIDGLVKVG…EDLLSALQKK (82 aa)) is three-helix bundle. Residues 864-984 (KPEVNRQIKN…EDDEKRIQAE (121 aa)) adopt a coiled-coil conformation. The segment at 917–984 (KQQEEEAERL…EDDEKRIQAE (68 aa)) is SAH. Residues 933–955 (MEKERKRREEDEERRRKEEEERR) form a disordered region. Phosphoserine is present on Ser1025. Residues 1034–1253 (LRRGPAVQAT…ESRQARPTYA (220 aa)) form an interaction with TAX1BP1 and CALCOCO2/NDP52 region. Positions 1084 to 1086 (RRL) are interaction with OPTN. Ser1123 carries the phosphoserine modification. The segment at 1125-1253 (QQNPAAQLPA…ESRQARPTYA (129 aa)) is interaction with TOM1.

Belongs to the TRAFAC class myosin-kinesin ATPase superfamily. Myosin family. As to quaternary structure, homodimer; dimerization seems to implicate the unfolding of the three-helix bundle region creating an additional calmodulin binding site, and cargo binding. Able to function as a monomer under specific conditions in vitro. Forms a complex with CFTR and DAB2 in the apical membrane of epithelial cells. Component of the DISP/DOCK7-induced septin displacement complex, at least composed of DOCK7, LRCH3 and MYO6. Binding to calmodulin through a unique insert, not found in other myosins, located in the neck region between the motor domain and the IQ domain appears to contribute to the directionality reversal. This interaction occurs only if the C-terminal lobe of calmodulin is occupied by calcium. Interaction with F-actin/ACTN1 occurs only at the apical brush border domain of the proximal tubule cells. Interacts with DAB2. In vitro, the C-terminal globular tail binds a C-terminal region of DAB2. Interacts with CFTR. Interacts with CABP5. Interacts (via residues 1128-1256) with TOM1 (via residues 392-463). Interacts (via residues 1060-1285) with OPTN. Interacts (via residues 1060-1285) with TAX1BP1 and CALCOCO2/NDP52. Interacts with TOM1L2. Interacts with CLIC5; may work together in a complex which also includes RDX and MYO6 to stabilize linkages between the plasma membrane and subjacent actin cytoskeleton at the base of stereocilia. In terms of processing, phosphorylation in the motor domain, induced by EGF, results in translocation of MYO6 from the cell surface to membrane ruffles and affects F-actin dynamics. Phosphorylated in vitro by p21-activated kinase (PAK). As to expression, within the cochlea, expressed specifically within the sensory hair cells (at protein level). Expressed in the inner and outer plexiform layer of the retina (at protein level). Widely expressed. Expressed in the brain, kidney, liver, and testis.

The protein resides in the golgi apparatus. The protein localises to the trans-Golgi network membrane. It localises to the nucleus. It is found in the cytoplasm. Its subcellular location is the perinuclear region. The protein resides in the membrane. The protein localises to the clathrin-coated pit. It localises to the cytoplasmic vesicle. It is found in the clathrin-coated vesicle. Its subcellular location is the cell projection. The protein resides in the filopodium. The protein localises to the ruffle membrane. It localises to the microvillus. It is found in the cytosol. Functionally, myosins are actin-based motor molecules with ATPase activity. Unconventional myosins serve in intracellular movements. Myosin 6 is a reverse-direction motor protein that moves towards the minus-end of actin filaments. Has slow rate of actin-activated ADP release due to weak ATP binding. Functions in a variety of intracellular processes such as vesicular membrane trafficking and cell migration. Required for the structural integrity of the Golgi apparatus via the p53-dependent pro-survival pathway. Appears to be involved in a very early step of clathrin-mediated endocytosis in polarized epithelial cells. Together with TOM1, mediates delivery of endocytic cargo to autophagosomes thereby promoting autophagosome maturation and driving fusion with lysosomes. Links TOM1 with autophagy receptors, such as TAX1BP1; CALCOCO2/NDP52 and OPTN. May act as a regulator of F-actin dynamics. As part of the DISP complex, may regulate the association of septins with actin and thereby regulate the actin cytoskeleton. May play a role in transporting DAB2 from the plasma membrane to specific cellular targets. May play a role in the extension and network organization of neurites. Required for structural integrity of inner ear hair cells. Required for the correct localization of CLIC5 and RDX at the stereocilium base. Modulates RNA polymerase II-dependent transcription. This is Unconventional myosin-VI (Myo6) from Mus musculus (Mouse).